A 415-amino-acid polypeptide reads, in one-letter code: Putative competence-damage inducible protein (415 aa).

It belongs to the CinA family.

This Listeria welshimeri serovar 6b (strain ATCC 35897 / DSM 20650 / CCUG 15529 / CIP 8149 / NCTC 11857 / SLCC 5334 / V8) protein is Putative competence-damage inducible protein.